The following is a 208-amino-acid chain: Small ribosomal subunit protein uS9c (208 aa).

The transit peptide at 1–52 (MASITNLASSLSSLSFSSQVSQRPNTISFPRANSVFALPAKSARRASLSITA) directs the protein to the chloroplast.

This sequence belongs to the universal ribosomal protein uS9 family.

It localises to the plastid. It is found in the chloroplast. Functionally, binds directly to 16S ribosomal RNA. In Arabidopsis thaliana (Mouse-ear cress), this protein is Small ribosomal subunit protein uS9c (RPS9).